Consider the following 498-residue polypeptide: MTYLLALDQGTSSSRSIVFDERGRIVAQAQRELPQIYPRPGWVEHDPREIWRTQLATAQDALREARITAQDVRALGITNQRETTVLWNRRTGQPVHHAIVWQDRRAEPACAQLREQGHAAAIQAKTGLLIDAYFSGTKLQWLLDHVPGARDAAEAGELAFGTVDSWLIWQLTGGTRHVTDVSNASRTMLFNVHTNQWDDELLQLLRIPRALMPEVLPSASDFGATDAALLGGPIAIGGVAGDQQSALFGQACFTAGMAKNTYGTGCFMLMHTGSRFQKSENGLLTTSAAQASRSPEYAMEGSVFVGGAVVQWLRDGLRAISASSEVQALAESVPDSGGVMMVPAFTGLGAPYWKPDARGTITGLTRGTTIAHIARAALESIAYQSAALLAAMSRDAVAAGGAPVSELRVDGGACVNDLLMQFQADLLGIPVVRPAVVETTALGAAYLAGLASGVYASTDELSALWQAERRFTPTLPRSQAEALMARWEHAVAQAVLPG.

Residue Thr-11 participates in ADP binding. Residues Thr-11, Ser-12, and Ser-13 each coordinate ATP. Residue Thr-11 participates in sn-glycerol 3-phosphate binding. Position 15 (Arg-15) interacts with ADP. Residues Arg-81, Glu-82, Tyr-133, and Asp-242 each coordinate sn-glycerol 3-phosphate. The glycerol site is built by Arg-81, Glu-82, Tyr-133, Asp-242, and Gln-243. Residues Thr-264 and Gly-307 each coordinate ADP. Thr-264, Gly-307, Gln-311, and Gly-412 together coordinate ATP. Residues Gly-412 and Asn-416 each coordinate ADP.

This sequence belongs to the FGGY kinase family.

The enzyme catalyses glycerol + ATP = sn-glycerol 3-phosphate + ADP + H(+). The protein operates within polyol metabolism; glycerol degradation via glycerol kinase pathway; sn-glycerol 3-phosphate from glycerol: step 1/1. Inhibited by fructose 1,6-bisphosphate (FBP). Functionally, key enzyme in the regulation of glycerol uptake and metabolism. Catalyzes the phosphorylation of glycerol to yield sn-glycerol 3-phosphate. The polypeptide is Glycerol kinase (Acidovorax ebreus (strain TPSY) (Diaphorobacter sp. (strain TPSY))).